The chain runs to 365 residues: Sulfate/thiosulfate import ATP-binding protein CysA (365 aa).

Positions 3–237 (IEIANIKKSF…PATRFVLEFM (235 aa)) constitute an ABC transporter domain. An ATP-binding site is contributed by 35–42 (GPSGSGKT).

The protein belongs to the ABC transporter superfamily. Sulfate/tungstate importer (TC 3.A.1.6) family. In terms of assembly, the complex is composed of two ATP-binding proteins (CysA), two transmembrane proteins (CysT and CysW) and a solute-binding protein (CysP).

Its subcellular location is the cell inner membrane. It catalyses the reaction sulfate(out) + ATP + H2O = sulfate(in) + ADP + phosphate + H(+). The enzyme catalyses thiosulfate(out) + ATP + H2O = thiosulfate(in) + ADP + phosphate + H(+). Part of the ABC transporter complex CysAWTP involved in sulfate/thiosulfate import. Responsible for energy coupling to the transport system. The polypeptide is Sulfate/thiosulfate import ATP-binding protein CysA (Shigella flexneri).